Consider the following 161-residue polypeptide: SsrA-binding protein (161 aa).

Belongs to the SmpB family.

It is found in the cytoplasm. Its function is as follows. Required for rescue of stalled ribosomes mediated by trans-translation. Binds to transfer-messenger RNA (tmRNA), required for stable association of tmRNA with ribosomes. tmRNA and SmpB together mimic tRNA shape, replacing the anticodon stem-loop with SmpB. tmRNA is encoded by the ssrA gene; the 2 termini fold to resemble tRNA(Ala) and it encodes a 'tag peptide', a short internal open reading frame. During trans-translation Ala-aminoacylated tmRNA acts like a tRNA, entering the A-site of stalled ribosomes, displacing the stalled mRNA. The ribosome then switches to translate the ORF on the tmRNA; the nascent peptide is terminated with the 'tag peptide' encoded by the tmRNA and targeted for degradation. The ribosome is freed to recommence translation, which seems to be the essential function of trans-translation. The sequence is that of SsrA-binding protein from Vibrio parahaemolyticus serotype O3:K6 (strain RIMD 2210633).